The primary structure comprises 996 residues: KK-1 biosynthesis cluster protein D (996 aa).

Disordered stretches follow at residues 307–333 (HDTD…PELD), 425–449 (EQDN…ARDL), 489–556 (AGVA…ALRA), and 571–602 (STHS…SLHS). Composition is skewed to polar residues over residues 318–329 (PIRSNKLSQSKQ) and 428–439 (NQTNEEGTGEVQ). 2 stretches are compositionally biased toward basic and acidic residues: residues 440–449 (SQRDRRARDL) and 500–527 (RAAE…DKAA). Positions 572–590 (THSIHQRASVNTTAPTVAR) are enriched in polar residues.

It functions in the pathway secondary metabolite biosynthesis. In terms of biological role, part of the gene cluster that mediates the biosynthesis of KK-1, a novel cyclic depsipeptide with 10 residues which is a promising active compound with high activity against many plant pathogens, especially Botrytis cinerea. The role of kk1D in KK-1 biosynthesis has still to be determined. The nonribosomal peptide synthetase (NRPS) kk1B catalyzes the elongation and cyclization of the decapeptide chain composed of 1 D-lactic acid residue (D-Lac), 1 pipecolic acid residue (Pip), 1 aspartic acid residue (Asp), 1 isoleucine residue (Ile), 1 glycine residue (Gly), 1 tyrosine residue (Tyr) and 4 valine residues (Val). The Asp, Ile and 3 Val residues are N-methylated by the 5 methyltransferase domains from the NRPS (found in modules 3, 5, 6, 7 and 9), whereas the Tyr residue is O-methylated by the cluster encoded O-methyltransferase kk1A. The thioesterase kk1J is likely to be involved in the corrective mechanism of peptide chain synthesis. The D-lactate dehydrogenase kk1H is involved in the synthesis of D-lactic acid from pyruvic acid, which is recognized by the A domain of the first kk1B module. The pyrroline-5-carboxylate reductase kk1I is involved in the synthesis of the L-pipecolic acid residue of KK-1 from delta-1-pyrroline-5-carboxylate (P5C), a metabolic intermediate of lysine. It is still unclear how kk1C and kk1D are involved in the production of KK-1. In Curvularia clavata, this protein is KK-1 biosynthesis cluster protein D.